The primary structure comprises 724 residues: Degenerin mec-10 (724 aa).

Residues 1 to 15 (MNRNPRMSKFQPNPR) show a composition bias toward polar residues. The interval 1 to 22 (MNRNPRMSKFQPNPRSRSRFQD) is disordered. Residues 1 to 122 (MNRNPRMSKF…GQAPNSLYRA (122 aa)) lie on the Cytoplasmic side of the membrane. The helical transmembrane segment at 123–143 (AWVFLLLICAIQFINQAVAVI) threads the bilayer. Topologically, residues 144-684 (QKYQKMDKIT…FGGHLGLWSG (541 aa)) are extracellular. The interval 229-265 (KRGAGEKGTFEPANSACECDEEDGSNECEERSTEKPS) is disordered. Over residues 246-255 (ECDEEDGSNE) the composition is skewed to acidic residues. The segment covering 256-265 (CEERSTEKPS) has biased composition (basic and acidic residues). N-linked (GlcNAc...) asparagine glycosylation is found at Asn293, Asn369, Asn463, Asn605, and Asn624. The helical transmembrane segment at 685-705 (VSVMTCCEFVCLAFELIYMAI) threads the bilayer. Topologically, residues 706–724 (AHHINQQRIRRRENAANEY) are cytoplasmic.

Belongs to the amiloride-sensitive sodium channel (TC 1.A.6) family. Component of a non-voltage-gated amiloride-sensitive cation channel complex (also called the degenerin channel complex) composed of at least the mec-2, mec-4, mec-6 and mec-10 subunits; the complex mediates mechanotransduction in touch cells. Interacts with mec-4 and mec-6.

The protein resides in the cell membrane. Subunit of an amiloride-sensitive cation channel (degenerin channel complex) permeable for sodium, potassium, lithium and N-methylglucamine, and required for mechanosensory transduction (touch sensitivity). Negatively regulates the turning step of male mating behavior. The protein is Degenerin mec-10 of Caenorhabditis elegans.